We begin with the raw amino-acid sequence, 544 residues long: Chaperonin GroEL (544 aa).

Residues Thr-30 to Pro-33, Lys-51, Asp-87 to Thr-91, Gly-415, Asn-479 to Ala-481, and Asp-495 each bind ATP.

Belongs to the chaperonin (HSP60) family. Forms a cylinder of 14 subunits composed of two heptameric rings stacked back-to-back. Interacts with the co-chaperonin GroES.

Its subcellular location is the cytoplasm. The enzyme catalyses ATP + H2O + a folded polypeptide = ADP + phosphate + an unfolded polypeptide.. Functionally, together with its co-chaperonin GroES, plays an essential role in assisting protein folding. The GroEL-GroES system forms a nano-cage that allows encapsulation of the non-native substrate proteins and provides a physical environment optimized to promote and accelerate protein folding. This chain is Chaperonin GroEL, found in Francisella tularensis subsp. tularensis (strain WY96-3418).